The primary structure comprises 1093 residues: Atos homolog protein A (1093 aa).

The segment at 29-37 (ALLITEGRT) is transactivation domain 1 (TAD1). Disordered stretches follow at residues 396-479 (AGRP…GNPL), 558-579 (SSKS…GESK), and 746-788 (HDNF…GSMR). The segment covering 746 to 763 (HDNFKNKNRQDKTKAAHD) has biased composition (basic and acidic residues). A required for macropage invasion region spans residues 895–952 (LLGNFEESVLNFRLDPLGIVEGFTAEVGASGVFCPTHMTLPVEVSFYSVSDDNAPSPY). Residues 979–987 (FNPNKTVVK) form a transactivation domain 2 (TAD2) region.

The protein belongs to the ATOS family.

The protein localises to the nucleus. Transcription regulator that syncronizes transcriptional and translational programs to promote macrophage invasion of tissues. This chain is Atos homolog protein A (ATOSA), found in Gallus gallus (Chicken).